The primary structure comprises 743 residues: Threonine--tRNA ligase (743 aa).

Low complexity predominate over residues 1 to 15 (MSADSPSSPASSQAA). Residues 1 to 30 (MSADSPSSPASSQAAEVQVRLPDGSLKTQP) form a disordered region. The region spanning 13–76 (QAAEVQVRLP…GEIADDENVV (64 aa)) is the TGS domain. The tract at residues 264-619 (DHRVLGKQHG…LIEHFAGAFP (356 aa)) is catalytic. The insert stretch occupies residues 354–404 (AWSTRLDKDDLSKDDEDKLIAAAEVFGVKLPDYKPSASNDAKKDVLHRWQL). Positions 416, 467, and 596 each coordinate Zn(2+).

This sequence belongs to the class-II aminoacyl-tRNA synthetase family. In terms of assembly, homodimer. The cofactor is Zn(2+).

Its subcellular location is the cytoplasm. The catalysed reaction is tRNA(Thr) + L-threonine + ATP = L-threonyl-tRNA(Thr) + AMP + diphosphate + H(+). Catalyzes the attachment of threonine to tRNA(Thr) in a two-step reaction: L-threonine is first activated by ATP to form Thr-AMP and then transferred to the acceptor end of tRNA(Thr). Also edits incorrectly charged L-seryl-tRNA(Thr). This chain is Threonine--tRNA ligase, found in Rhodopirellula baltica (strain DSM 10527 / NCIMB 13988 / SH1).